Consider the following 393-residue polypeptide: O-phospho-L-seryl-tRNA:Cys-tRNA synthase 1 (393 aa).

Pyridoxal 5'-phosphate contacts are provided by residues 85-86, N190, and 213-215; these read AR and SGH. K216 is subject to N6-(pyridoxal phosphate)lysine.

It belongs to the SepCysS family. In terms of assembly, homodimer. Interacts with SepRS. The cofactor is pyridoxal 5'-phosphate.

The catalysed reaction is O-phospho-L-seryl-tRNA(Cys) + hydrogen sulfide + H(+) = L-cysteinyl-tRNA(Cys) + phosphate. Converts O-phospho-L-seryl-tRNA(Cys) (Sep-tRNA(Cys)) to L-cysteinyl-tRNA(Cys) (Cys-tRNA(Cys)). The protein is O-phospho-L-seryl-tRNA:Cys-tRNA synthase 1 of Methanospirillum hungatei JF-1 (strain ATCC 27890 / DSM 864 / NBRC 100397 / JF-1).